An 88-amino-acid polypeptide reads, in one-letter code: Large ribosomal subunit protein eL37A (88 aa).

Positions 19, 22, 34, and 37 each coordinate Zn(2+). The C4-type zinc-finger motif lies at 19–37; that stretch reads CNRCGRRSFHVQKKTCSSC.

The protein belongs to the eukaryotic ribosomal protein eL37 family. Component of the large ribosomal subunit (LSU). Mature yeast ribosomes consist of a small (40S) and a large (60S) subunit. The 40S small subunit contains 1 molecule of ribosomal RNA (18S rRNA) and 33 different proteins (encoded by 57 genes). The large 60S subunit contains 3 rRNA molecules (25S, 5.8S and 5S rRNA) and 46 different proteins (encoded by 81 genes). Zn(2+) serves as cofactor.

The protein localises to the cytoplasm. In terms of biological role, component of the ribosome, a large ribonucleoprotein complex responsible for the synthesis of proteins in the cell. The small ribosomal subunit (SSU) binds messenger RNAs (mRNAs) and translates the encoded message by selecting cognate aminoacyl-transfer RNA (tRNA) molecules. The large subunit (LSU) contains the ribosomal catalytic site termed the peptidyl transferase center (PTC), which catalyzes the formation of peptide bonds, thereby polymerizing the amino acids delivered by tRNAs into a polypeptide chain. The nascent polypeptides leave the ribosome through a tunnel in the LSU and interact with protein factors that function in enzymatic processing, targeting, and the membrane insertion of nascent chains at the exit of the ribosomal tunnel. This Saccharomyces cerevisiae (strain ATCC 204508 / S288c) (Baker's yeast) protein is Large ribosomal subunit protein eL37A.